We begin with the raw amino-acid sequence, 329 residues long: Biotin synthase (329 aa).

The 231-residue stretch at 48–278 (FLGNGVDLCS…TKKIAVCGGR (231 aa)) folds into the Radical SAM core domain. [4Fe-4S] cluster contacts are provided by cysteine 66, cysteine 70, and cysteine 73. [2Fe-2S] cluster is bound by residues serine 143 and cysteine 203.

It belongs to the radical SAM superfamily. Biotin synthase family. In terms of assembly, homodimer. [4Fe-4S] cluster is required as a cofactor. Requires [2Fe-2S] cluster as cofactor.

It catalyses the reaction (4R,5S)-dethiobiotin + (sulfur carrier)-SH + 2 reduced [2Fe-2S]-[ferredoxin] + 2 S-adenosyl-L-methionine = (sulfur carrier)-H + biotin + 2 5'-deoxyadenosine + 2 L-methionine + 2 oxidized [2Fe-2S]-[ferredoxin]. It participates in cofactor biosynthesis; biotin biosynthesis; biotin from 7,8-diaminononanoate: step 2/2. Functionally, catalyzes the conversion of dethiobiotin (DTB) to biotin by the insertion of a sulfur atom into dethiobiotin via a radical-based mechanism. The polypeptide is Biotin synthase (Geobacter metallireducens (strain ATCC 53774 / DSM 7210 / GS-15)).